Reading from the N-terminus, the 192-residue chain is Signal peptidase complex subunit 2 (192 aa).

The Cytoplasmic segment spans residues 1-46 (MEEKKTESTNKNVKKANLLDHHSIKHILDESVSDIVTSRGYKEDVR). A helical membrane pass occupies residues 47 to 69 (LSNLKLILGTIIIVVALVAQFYN). The Lumenal portion of the chain corresponds to 70-78 (KKFPENRDF). Residues 79–98 (LIGCIALYVVLNAVLQLILY) traverse the membrane as a helical segment. Residues 99-192 (TKEKNAILFT…YAEEEPKKKK (94 aa)) are Cytoplasmic-facing.

It belongs to the SPCS2 family. In terms of assembly, component of the signal peptidase complex (SPC) composed of a catalytic subunit SEC11 and three accessory subunits SPCS1, SPCS2 and SPCS3. The complex induces a local thinning of the ER membrane which is used to measure the length of the signal peptide (SP) h-region of protein substrates. This ensures the selectivity of the complex towards h-regions shorter than 18-20 amino acids.

Its subcellular location is the endoplasmic reticulum membrane. Functionally, component of the signal peptidase complex (SPC) which catalyzes the cleavage of N-terminal signal sequences from nascent proteins as they are translocated into the lumen of the endoplasmic reticulum. Enhances the enzymatic activity of SPC and facilitates the interactions between different components of the translocation site. This is Signal peptidase complex subunit 2 from Arabidopsis thaliana (Mouse-ear cress).